The sequence spans 342 residues: ATPase asna-1 (342 aa).

Lys-26–Thr-33 contacts ATP. Asp-55 is an active-site residue. ATP contacts are provided by Glu-243 and Asn-270. Residues Cys-285 and Cys-288 each coordinate Zn(2+).

This sequence belongs to the arsA ATPase family. In terms of assembly, homodimer.

Its subcellular location is the cytoplasm. The protein localises to the endoplasmic reticulum. ATPase required for the post-translational delivery of tail-anchored (TA) proteins to the endoplasmic reticulum. Recognizes and selectively binds the transmembrane domain of TA proteins in the cytosol. This complex then targets to the endoplasmic reticulum by membrane-bound receptors, where the tail-anchored protein is released for insertion. This process is regulated by ATP binding and hydrolysis. ATP binding drives the homodimer towards the closed dimer state, facilitating recognition of newly synthesized TA membrane proteins. ATP hydrolysis is required for insertion. Subsequently, the homodimer reverts towards the open dimer state, lowering its affinity for the membrane-bound receptor, and returning it to the cytosol to initiate a new round of targeting. May be involved in insulin signaling. This chain is ATPase asna-1, found in Caenorhabditis elegans.